A 341-amino-acid polypeptide reads, in one-letter code: Nucleoid-associated protein Sden_2335 (341 aa).

It belongs to the YejK family.

It localises to the cytoplasm. Its subcellular location is the nucleoid. The chain is Nucleoid-associated protein Sden_2335 from Shewanella denitrificans (strain OS217 / ATCC BAA-1090 / DSM 15013).